A 324-amino-acid chain; its full sequence is Beta-ketoacyl-[acyl-carrier-protein] synthase III (324 aa).

Active-site residues include cysteine 112 and histidine 251. The tract at residues 252–256 (QANIR) is ACP-binding. Residue asparagine 281 is part of the active site.

It belongs to the thiolase-like superfamily. FabH family. Homodimer.

The protein resides in the cytoplasm. It catalyses the reaction malonyl-[ACP] + acetyl-CoA + H(+) = 3-oxobutanoyl-[ACP] + CO2 + CoA. Its pathway is lipid metabolism; fatty acid biosynthesis. Its function is as follows. Catalyzes the condensation reaction of fatty acid synthesis by the addition to an acyl acceptor of two carbons from malonyl-ACP. Catalyzes the first condensation reaction which initiates fatty acid synthesis and may therefore play a role in governing the total rate of fatty acid production. Possesses both acetoacetyl-ACP synthase and acetyl transacylase activities. Its substrate specificity determines the biosynthesis of branched-chain and/or straight-chain of fatty acids. The sequence is that of Beta-ketoacyl-[acyl-carrier-protein] synthase III from Desulfotalea psychrophila (strain LSv54 / DSM 12343).